The sequence spans 588 residues: MIQHPRIGIRPTIDGRRQGVRESLEVQTMNMAKSVADLISSTLKYPDGEPVECVISPSTIGRVPEAAASHELFKKSNVCATITVTPCWCYGSETMDMSPDIPHAIWGFNGTERPGAVYLAAVLASHAQKGIPAFGIYGRDVQEANDTDIPEDVKEKLLRYARAALATGLMRDTAYLSMGSVSMGIGGSIVNPDFFQEYLGMRNESVDMTEFTRRMDRGIYDPEEFERAMVWVKEHIKEGVDRNREDLILSKEEKEKQWEFVIKMFMIGRDLMVGNPRLAELGFEEEAVGHHALVAGFQGQRQWTDHFPNGDFMETFLNTQFDWNGIRKPFVFATENDSLNGVSMLFNYLLTNTPQIFADVRTYWSPEAVERVTGYTLEGRAAAGFLHLINSGSCTLDGTGQATRDGKPVMKPFWELDESEVQAMLENTDFPPANREYFRGGGFSTRFLTKGDMPVTMVRLNLLKGVGPVLQIAEGYTLELPEDVHHTLDNRTDPGWPTTWFAPRLTGKGAFKSVYDVMNNWGANHGAITYGHIGADLITLASMLRIPVNMHNVPEEDIFRPKNWSLFGTEDLESADYRACQLLGPLHK.

Catalysis depends on proton acceptor residues Glu-335 and Asp-359. Mn(2+) is bound by residues Glu-335, Asp-359, and His-525.

Belongs to the L-fucose isomerase family. Requires Mn(2+) as cofactor.

It localises to the cytoplasm. It catalyses the reaction L-fucose = L-fuculose. The protein operates within carbohydrate degradation; L-fucose degradation; L-lactaldehyde and glycerone phosphate from L-fucose: step 1/3. Converts the aldose L-fucose into the corresponding ketose L-fuculose. The chain is L-fucose isomerase from Streptococcus pneumoniae (strain ATCC 700669 / Spain 23F-1).